A 469-amino-acid polypeptide reads, in one-letter code: DNA (cytosine-5-)-methyltransferase M.ApeKI (469 aa).

The SAM-dependent MTase C5-type domain maps to 4–469 (YSTISLFSGA…EALAEVLDAV (466 aa)). Cysteine 93 is a catalytic residue.

It belongs to the class I-like SAM-binding methyltransferase superfamily. C5-methyltransferase family.

The catalysed reaction is a 2'-deoxycytidine in DNA + S-adenosyl-L-methionine = a 5-methyl-2'-deoxycytidine in DNA + S-adenosyl-L-homocysteine + H(+). Cytosine methylase that recognizes the double-stranded sequence 5'-GC(A/T)GC-3', methylates C-5 position of the second cytosine on both strands, and protects the DNA from cleavage by the ApeKI endonuclease. This chain is DNA (cytosine-5-)-methyltransferase M.ApeKI, found in Aeropyrum pernix (strain ATCC 700893 / DSM 11879 / JCM 9820 / NBRC 100138 / K1).